Consider the following 310-residue polypeptide: Taste receptor type 2 member 125 (310 aa).

At 1–2 (MG) the chain is on the extracellular side. A helical membrane pass occupies residues 3 to 23 (IVIGIICAFIIIVQFIIGNVA). At 24–46 (NGFIALVNIIDWVKRRKISLVDQ) the chain is on the cytoplasmic side. Residues 47-67 (IITALAISRIDMLCSTFLIVL) traverse the membrane as a helical segment. Residues 68-87 (ITSLYPDLNTAVNMVKISNN) lie on the Extracellular side of the membrane. The helical transmembrane segment at 88 to 108 (IWIVANHFSIWLATSLSIFYF) threads the bilayer. The Cytoplasmic segment spans residues 109-128 (LKIANFSNYVFLCLRWRLSK). The chain crosses the membrane as a helical span at residues 129–149 (VVSVTLLLSLVLLLMNILIMN). Topologically, residues 150-185 (MHIDTWSDGFKRNVSFGFRSKNCTRFFKLALLINTT) are extracellular. Asn162, Asn171, and Asn183 each carry an N-linked (GlcNAc...) asparagine glycan. A helical transmembrane segment spans residues 186-206 (FTCVPFTVSMVAFLLLIFSLW). At 207–232 (RHLKNMQYHAKGSRDPSTAVHIKALQ) the chain is on the cytoplasmic side. The helical transmembrane segment at 233–253 (MVVVFVLFYTFFFLSLAIQLW) threads the bilayer. Residues 254-261 (TSESLEKN) are Extracellular-facing. The chain crosses the membrane as a helical span at residues 262–282 (NLFYVTLIITFPSVHSCMLIL). Over 283–310 (RNSKLRQASLLVLWWLLCRSKDIQTLVP) the chain is Cytoplasmic.

This sequence belongs to the G-protein coupled receptor T2R family.

It is found in the membrane. Functionally, putative taste receptor which may play a role in the perception of bitterness. The chain is Taste receptor type 2 member 125 from Rattus norvegicus (Rat).